Reading from the N-terminus, the 332-residue chain is Fructose-1,6-bisphosphatase class 1 1 (332 aa).

Residues Glu92, Asp115, Leu117, and Asp118 each coordinate Mg(2+). Substrate is bound by residues 118–121 (DGSS), Asn211, Tyr244, 262–264 (YLY), and Lys274. Position 280 (Glu280) interacts with Mg(2+).

This sequence belongs to the FBPase class 1 family. Homotetramer. The cofactor is Mg(2+).

The protein localises to the cytoplasm. It carries out the reaction beta-D-fructose 1,6-bisphosphate + H2O = beta-D-fructose 6-phosphate + phosphate. It participates in carbohydrate biosynthesis; gluconeogenesis. This is Fructose-1,6-bisphosphatase class 1 1 from Christiangramia forsetii (strain DSM 17595 / CGMCC 1.15422 / KT0803) (Gramella forsetii).